The chain runs to 264 residues: Tryptophan synthase alpha chain (264 aa).

Residues Glu49 and Asp60 each act as proton acceptor in the active site.

The protein belongs to the TrpA family. Tetramer of two alpha and two beta chains.

The enzyme catalyses (1S,2R)-1-C-(indol-3-yl)glycerol 3-phosphate + L-serine = D-glyceraldehyde 3-phosphate + L-tryptophan + H2O. Its pathway is amino-acid biosynthesis; L-tryptophan biosynthesis; L-tryptophan from chorismate: step 5/5. The alpha subunit is responsible for the aldol cleavage of indoleglycerol phosphate to indole and glyceraldehyde 3-phosphate. In Laribacter hongkongensis (strain HLHK9), this protein is Tryptophan synthase alpha chain.